Reading from the N-terminus, the 1093-residue chain is Semaphorin-5B (1093 aa).

Positions 1-19 are cleaved as a signal peptide; the sequence is MVVPGPLALSLLLSSLTLL. Residues 20 to 978 lie on the Extracellular side of the membrane; that stretch reads VSHLSSSQDI…TSCGGFNLIH (959 aa). The 451-residue stretch at 45-495 folds into the Sema domain; that stretch reads HPIVAFEDLK…LSDRVLRVPL (451 aa). N-linked (GlcNAc...) asparagine glycosylation is found at Asn59 and Asn95. Cystine bridges form between Cys114–Cys124 and Cys141–Cys150. Residues Asn157, Asn178, and Asn287 are each glycosylated (N-linked (GlcNAc...) asparagine). Intrachain disulfides connect Cys264–Cys367 and Cys288–Cys330. N-linked (GlcNAc...) asparagine glycosylation is found at Asn333, Asn378, Asn532, Asn539, Asn547, and Asn602. 7 TSP type-1 domains span residues 551–605, 606–662, 664–713, 721–776, 795–850, 852–907, and 908–952; these read DGGF…NCSR, NGAW…TPCP, PIFW…EACP, WTPW…ACDT, NGGW…QACP, RGAW…QACP, and EGWS…RPCP. 6 disulfides stabilise this stretch: Cys618/Cys655, Cys622/Cys661, Cys633/Cys645, Cys676/Cys707, Cys680/Cys712, and Cys691/Cys697. N-linked (GlcNAc...) asparagine glycosylation is present at Asn728. 6 disulfide bridges follow: Cys807–Cys844, Cys811–Cys849, Cys822–Cys834, Cys864–Cys901, Cys868–Cys906, and Cys879–Cys891. Residue Asn944 is glycosylated (N-linked (GlcNAc...) asparagine). A helical membrane pass occupies residues 979–999; sequence LIVTGVSCFLVSGLLTLAVYL. Residues 1000-1093 are Cytoplasmic-facing; the sequence is SCQHCQRQSQ…SPGQRCFPNS (94 aa).

The protein belongs to the semaphorin family. In terms of tissue distribution, in adult, only detected in brain.

Its subcellular location is the membrane. Its function is as follows. May act as a positive axonal guidance cue. The chain is Semaphorin-5B (Sema5b) from Mus musculus (Mouse).